Here is a 206-residue protein sequence, read N- to C-terminus: Small ribosomal subunit protein eS8 (206 aa).

A disordered region spans residues 1–37; the sequence is MGISRDSRHKRSATGAKRAQFRKKRKFELGRQPANTK.

Belongs to the eukaryotic ribosomal protein eS8 family. Component of the small ribosomal subunit. Mature ribosomes consist of a small (40S) and a large (60S) subunit. The 40S subunit contains about 32 different proteins and 1 molecule of RNA (18S). The 60S subunit contains 45 different proteins and 3 molecules of RNA (25S, 5.8S and 5S).

It localises to the cytoplasm. Component of the ribosome, a large ribonucleoprotein complex responsible for the synthesis of proteins in the cell. The small ribosomal subunit (SSU) binds messenger RNAs (mRNAs) and translates the encoded message by selecting cognate aminoacyl-transfer RNA (tRNA) molecules. The large subunit (LSU) contains the ribosomal catalytic site termed the peptidyl transferase center (PTC), which catalyzes the formation of peptide bonds, thereby polymerizing the amino acids delivered by tRNAs into a polypeptide chain. The nascent polypeptides leave the ribosome through a tunnel in the LSU and interact with protein factors that function in enzymatic processing, targeting, and the membrane insertion of nascent chains at the exit of the ribosomal tunnel. This is Small ribosomal subunit protein eS8 (RPS8A) from Candida albicans (strain SC5314 / ATCC MYA-2876) (Yeast).